The sequence spans 471 residues: Argininosuccinate lyase (471 aa).

The protein belongs to the lyase 1 family. Argininosuccinate lyase subfamily.

The protein localises to the cytoplasm. It catalyses the reaction 2-(N(omega)-L-arginino)succinate = fumarate + L-arginine. It functions in the pathway amino-acid biosynthesis; L-arginine biosynthesis; L-arginine from L-ornithine and carbamoyl phosphate: step 3/3. The sequence is that of Argininosuccinate lyase from Paramagnetospirillum magneticum (strain ATCC 700264 / AMB-1) (Magnetospirillum magneticum).